The sequence spans 415 residues: Methylthioribose-1-phosphate isomerase (415 aa).

Asp284 functions as the Proton donor in the catalytic mechanism.

It belongs to the eIF-2B alpha/beta/delta subunits family. MtnA subfamily.

Its subcellular location is the cytoplasm. It localises to the nucleus. The catalysed reaction is 5-(methylsulfanyl)-alpha-D-ribose 1-phosphate = 5-(methylsulfanyl)-D-ribulose 1-phosphate. The protein operates within amino-acid biosynthesis; L-methionine biosynthesis via salvage pathway; L-methionine from S-methyl-5-thio-alpha-D-ribose 1-phosphate: step 1/6. Functionally, catalyzes the interconversion of methylthioribose-1-phosphate (MTR-1-P) into methylthioribulose-1-phosphate (MTRu-1-P). This chain is Methylthioribose-1-phosphate isomerase, found in Candida glabrata (strain ATCC 2001 / BCRC 20586 / JCM 3761 / NBRC 0622 / NRRL Y-65 / CBS 138) (Yeast).